The sequence spans 209 residues: Uracil phosphoribosyltransferase (209 aa).

Residues Arg-79, Arg-104, and Asp-131–Ser-139 each bind 5-phospho-alpha-D-ribose 1-diphosphate. Uracil is bound by residues Ile-194 and Gly-199–Ala-201. Residue Asp-200 coordinates 5-phospho-alpha-D-ribose 1-diphosphate.

Belongs to the UPRTase family. Mg(2+) serves as cofactor.

It catalyses the reaction UMP + diphosphate = 5-phospho-alpha-D-ribose 1-diphosphate + uracil. It participates in pyrimidine metabolism; UMP biosynthesis via salvage pathway; UMP from uracil: step 1/1. Allosterically activated by GTP. Its function is as follows. Catalyzes the conversion of uracil and 5-phospho-alpha-D-ribose 1-diphosphate (PRPP) to UMP and diphosphate. The polypeptide is Uracil phosphoribosyltransferase (Clostridium perfringens (strain ATCC 13124 / DSM 756 / JCM 1290 / NCIMB 6125 / NCTC 8237 / Type A)).